A 703-amino-acid chain; its full sequence is Pinin (703 aa).

Residue Ala2 is modified to N-acetylalanine. Residues 2–32 are a coiled coil; it reads AVAVRTLQEQLEKAKESLKNVDENIRKLTGR. Residues 46 to 148 form a disordered region; sequence ALSGPGGGRG…ETPERPGPIF (103 aa). Ser48 carries the post-translational modification Phosphoserine. Residue Arg54 is modified to Omega-N-methylarginine. 4 positions are modified to phosphoserine: Ser58, Ser66, Ser96, and Ser100. Positions 87-100 are enriched in basic and acidic residues; the sequence is GGERRTRRESRQES. Lys109 participates in a covalent cross-link: Glycyl lysine isopeptide (Lys-Gly) (interchain with G-Cter in SUMO2). Phosphoserine is present on residues Ser114 and Ser115. Lys121 is covalently cross-linked (Glycyl lysine isopeptide (Lys-Gly) (interchain with G-Cter in SUMO2)). Thr125 is subject to Phosphothreonine. Glycyl lysine isopeptide (Lys-Gly) (interchain with G-Cter in SUMO2) cross-links involve residues Lys138 and Lys157. Lys159 is covalently cross-linked (Glycyl lysine isopeptide (Lys-Gly) (interchain with G-Cter in SUMO1); alternate). Residue Lys159 forms a Glycyl lysine isopeptide (Lys-Gly) (interchain with G-Cter in SUMO2); alternate linkage. The stretch at 165–236 forms a coiled coil; it reads ATERQKRRQE…HNAKIIKYIR (72 aa). The sufficient for PSAP complex assembly stretch occupies residues 223 to 285; the sequence is EWNEHNAKII…AEQINKMEAR (63 aa). Lys230 participates in a covalent cross-link: Glycyl lysine isopeptide (Lys-Gly) (interchain with G-Cter in SUMO2). Lys240 carries the post-translational modification N6-acetyllysine; alternate. An N6-succinyllysine; alternate modification is found at Lys240. Glycyl lysine isopeptide (Lys-Gly) (interchain with G-Cter in SUMO2) cross-links involve residues Lys281, Lys306, and Lys313. 3 disordered regions span residues 284–314, 331–394, and 408–703; these read ARPR…EGKV, RVGT…EEVM, and AEQE…PGQL. 2 stretches are compositionally biased toward basic and acidic residues: residues 348-357 and 366-386; these read EIPIVHSDAE and KQEM…EKQQ. Ser354 carries the phosphoserine modification. Positions 354–411 form a coiled coil; the sequence is SDAEKEQEEEEQKQEMEVKMEEETEVRESEKQQDSQPEEVMDVLEMVESVKNVIAEQE. Glycyl lysine isopeptide (Lys-Gly) (interchain with G-Cter in SUMO2) cross-links involve residues Lys366 and Lys372. Phosphoserine is present on residues Ser382 and Ser388. Positions 417 to 433 are enriched in basic and acidic residues; sequence QVERVEPSENEASKELE. Ser450 and Ser457 each carry phosphoserine. Residues 479–489 show a composition bias toward low complexity; the sequence is PMAQPQAQSLP. Residues Lys541 and Lys549 each participate in a glycyl lysine isopeptide (Lys-Gly) (interchain with G-Cter in SUMO2) cross-link. Phosphoserine is present on Ser565. Lys566 is covalently cross-linked (Glycyl lysine isopeptide (Lys-Gly) (interchain with G-Cter in SUMO2)). Residues 572-588 are compositionally biased toward basic residues; the sequence is RSRSRGRARNRTSKSRS. Low complexity predominate over residues 589-642; that stretch reads RSSSSSSSSSSSTSSSSGSSSSSGSSSSRTSSSSSSTSGSSSRDSSSSTTSSSE. Residues 646-664 are compositionally biased toward basic residues; that stretch reads RSRGRGHNRDRKHRRSVDR. The segment covering 665 to 676 has biased composition (basic and acidic residues); it reads KRRDASGLERSH. Phosphoserine is present on residues Ser670 and Ser691.

Belongs to the pinin family. As to quaternary structure, found in a mRNA splicing-dependent exon junction complex (EJC). Found in a complex with SR proteins. Found in a mRNP complex with RNPS1. Component of the PSAP complex consisting of RNPS1, SAP18 and PNN. Interacts with PNISR, CTBP1, CTBP2, KRT8, KRT18, KRT19, PS1D/PNO40, PPIG, RNPS1, SFRS4 and SRRM2. Identified in the spliceosome C complex.

It is found in the nucleus speckle. The protein localises to the cell junction. The protein resides in the desmosome. Its function is as follows. Transcriptional activator binding to the E-box 1 core sequence of the E-cadherin promoter gene; the core-binding sequence is 5'CAGGTG-3'. Capable of reversing CTBP1-mediated transcription repression. Auxiliary component of the splicing-dependent multiprotein exon junction complex (EJC) deposited at splice junction on mRNAs. The EJC is a dynamic structure consisting of core proteins and several peripheral nuclear and cytoplasmic associated factors that join the complex only transiently either during EJC assembly or during subsequent mRNA metabolism. Participates in the regulation of alternative pre-mRNA splicing. Associates to spliced mRNA within 60 nt upstream of the 5'-splice sites. Component of the PSAP complex which binds RNA in a sequence-independent manner and is proposed to be recruited to the EJC prior to or during the splicing process and to regulate specific excision of introns in specific transcription subsets. Involved in the establishment and maintenance of epithelia cell-cell adhesion. The polypeptide is Pinin (PNN) (Bos taurus (Bovine)).